Here is a 105-residue protein sequence, read N- to C-terminus: UPF0235 protein A1C_06510 (105 aa).

The protein belongs to the UPF0235 family.

This chain is UPF0235 protein A1C_06510, found in Rickettsia akari (strain Hartford).